We begin with the raw amino-acid sequence, 568 residues long: Urease subunit alpha (568 aa).

The 439-residue stretch at 130–568 folds into the Urease domain; it reads GGIDTHIHFI…LPMAQRYFLF (439 aa). Ni(2+) contacts are provided by His135, His137, and Lys218. Position 218 is an N6-carboxylysine (Lys218). His220 provides a ligand contact to substrate. Ni(2+)-binding residues include His247 and His273. Residue His321 is the Proton donor of the active site. Residue Asp361 participates in Ni(2+) binding.

The protein belongs to the metallo-dependent hydrolases superfamily. Urease alpha subunit family. As to quaternary structure, heterotrimer of UreA (gamma), UreB (beta) and UreC (alpha) subunits. Three heterotrimers associate to form the active enzyme. The cofactor is Ni cation. Carboxylation allows a single lysine to coordinate two nickel ions.

The protein resides in the cytoplasm. The catalysed reaction is urea + 2 H2O + H(+) = hydrogencarbonate + 2 NH4(+). It participates in nitrogen metabolism; urea degradation; CO(2) and NH(3) from urea (urease route): step 1/1. In Burkholderia pseudomallei (strain 668), this protein is Urease subunit alpha.